A 372-amino-acid polypeptide reads, in one-letter code: Tribbles homolog 1 (372 aa).

2 disordered regions span residues methionine 1 to alanine 26 and arginine 49 to serine 85. Residues tyrosine 59 to serine 74 are compositionally biased toward pro residues. Residues isoleucine 91–phenylalanine 338 form the Protein kinase domain. The COP1-binding motif lies at aspartate 355 to glutamate 360.

It belongs to the protein kinase superfamily. CAMK Ser/Thr protein kinase family. Tribbles subfamily. In terms of assembly, monomer. Interacts (via protein kinase domain) with CEBPA. Interacts with COP1.

Adapter protein involved in protein degradation by interacting with COP1 ubiquitin ligase. Promotes CEBPA degradation and inhibits its function. Controls macrophage, eosinophil and neutrophil differentiation via the COP1-binding domain. Regulates myeloid cell differentiation by altering the expression of CEBPA in a COP1-dependent manner. Interacts with MAPK kinases and regulates activation of MAP kinases, but has no kinase activity. This Mus musculus (Mouse) protein is Tribbles homolog 1.